Here is a 1161-residue protein sequence, read N- to C-terminus: PAN2-PAN3 deadenylation complex catalytic subunit pan2 (1161 aa).

WD repeat units follow at residues Gly-20–Ser-59 and Ala-276–Glu-315. Residues Met-316 to Asp-452 form a linker region. Residues Asp-453–Lys-822 form the USP domain. Residues Val-871–Leu-1049 enclose the Exonuclease domain. A divalent metal cation is bound by residues Asp-874, Glu-876, Asp-983, and Asp-1042. Residues Asn-1009–Gly-1060 form a WD 4 repeat. The segment at Arg-1092 to Lys-1161 is disordered. Residues Val-1097–Thr-1110 show a composition bias toward polar residues. Residues Ala-1116–Pro-1129 are compositionally biased toward low complexity. The segment covering Thr-1145 to Phe-1155 has biased composition (gly residues).

Belongs to the peptidase C19 family. PAN2 subfamily. As to quaternary structure, forms a heterotrimer with an asymmetric homodimer of the regulatory subunit pan3 to form the poly(A)-nuclease (PAN) deadenylation complex. The cofactor is a divalent metal cation.

The protein resides in the cytoplasm. It carries out the reaction Exonucleolytic cleavage of poly(A) to 5'-AMP.. Its activity is regulated as follows. Positively regulated by the regulatory subunit pan3. Its function is as follows. Catalytic subunit of the poly(A)-nuclease (PAN) deadenylation complex, one of two cytoplasmic mRNA deadenylases involved in mRNA turnover. PAN specifically shortens poly(A) tails of RNA and the activity is stimulated by poly(A)-binding protein pab1. PAN deadenylation is followed by rapid degradation of the shortened mRNA tails by the CCR4-NOT complex. Deadenylated mRNAs are then degraded by two alternative mechanisms, namely exosome-mediated 3'-5' exonucleolytic degradation, or deadenylation-dependent mRNA decaping and subsequent 5'-3' exonucleolytic degradation by xrn1. May also be involved in post-transcriptional maturation of mRNA poly(A) tails. The sequence is that of PAN2-PAN3 deadenylation complex catalytic subunit pan2 from Neosartorya fischeri (strain ATCC 1020 / DSM 3700 / CBS 544.65 / FGSC A1164 / JCM 1740 / NRRL 181 / WB 181) (Aspergillus fischerianus).